The primary structure comprises 95 residues: Beta-defensin 132 (95 aa).

The first 22 residues, 1-22 (MKFLLLVLAALGFLTQVIPASG), serve as a signal peptide directing secretion. 3 cysteine pairs are disulfide-bonded: cysteine 27-cysteine 55, cysteine 35-cysteine 49, and cysteine 39-cysteine 56. The interval 72-95 (GNHWPSRSRNTQRKNKKQQTTVTP) is disordered.

Belongs to the beta-defensin family.

The protein resides in the secreted. In terms of biological role, has antibacterial activity. The protein is Beta-defensin 132 (DEFB132) of Macaca fascicularis (Crab-eating macaque).